We begin with the raw amino-acid sequence, 236 residues long: Phosphoglycolate phosphatase (236 aa).

Asp-14 acts as the Nucleophile in catalysis. Asp-14, Asp-16, and Asp-177 together coordinate Mg(2+).

This sequence belongs to the HAD-like hydrolase superfamily. CbbY/CbbZ/Gph/YieH family. The cofactor is Mg(2+).

It carries out the reaction 2-phosphoglycolate + H2O = glycolate + phosphate. The protein operates within organic acid metabolism; glycolate biosynthesis; glycolate from 2-phosphoglycolate: step 1/1. Functionally, specifically catalyzes the dephosphorylation of 2-phosphoglycolate. Is involved in the dissimilation of the intracellular 2-phosphoglycolate formed during the DNA repair of 3'-phosphoglycolate ends, a major class of DNA lesions induced by oxidative stress. The protein is Phosphoglycolate phosphatase of Neisseria gonorrhoeae (strain ATCC 700825 / FA 1090).